Reading from the N-terminus, the 195-residue chain is Imidazoleglycerol-phosphate dehydratase (195 aa).

Belongs to the imidazoleglycerol-phosphate dehydratase family.

It is found in the cytoplasm. It carries out the reaction D-erythro-1-(imidazol-4-yl)glycerol 3-phosphate = 3-(imidazol-4-yl)-2-oxopropyl phosphate + H2O. It functions in the pathway amino-acid biosynthesis; L-histidine biosynthesis; L-histidine from 5-phospho-alpha-D-ribose 1-diphosphate: step 6/9. This Bordetella avium (strain 197N) protein is Imidazoleglycerol-phosphate dehydratase.